A 79-amino-acid chain; its full sequence is Putative defensin-like protein 274 (79 aa).

A signal peptide spans 1–23 (MASSRFQLVALLVVFSLVISITA). Intrachain disulfides connect Cys-35-Cys-76, Cys-41-Cys-64, Cys-47-Cys-74, and Cys-51-Cys-75.

Belongs to the DEFL family.

It localises to the secreted. This Arabidopsis thaliana (Mouse-ear cress) protein is Putative defensin-like protein 274.